The chain runs to 163 residues: Large ribosomal subunit protein uL13m (163 aa).

Position 2 is an N-acetylserine (serine 2). Residues serine 2 to lysine 4 constitute a propeptide that is removed on maturation.

Belongs to the universal ribosomal protein uL13 family. Component of the mitochondrial large ribosomal subunit (mt-LSU). Mature yeast 74S mitochondrial ribosomes consist of a small (37S) and a large (54S) subunit. The 37S small subunit contains a 15S ribosomal RNA (15S mt-rRNA) and 34 different proteins. The 54S large subunit contains a 21S rRNA (21S mt-rRNA) and 46 different proteins.

It is found in the mitochondrion. In terms of biological role, component of the mitochondrial ribosome (mitoribosome), a dedicated translation machinery responsible for the synthesis of mitochondrial genome-encoded proteins, including at least some of the essential transmembrane subunits of the mitochondrial respiratory chain. The mitoribosomes are attached to the mitochondrial inner membrane and translation products are cotranslationally integrated into the membrane. The chain is Large ribosomal subunit protein uL13m (MRPL23) from Saccharomyces cerevisiae (strain ATCC 204508 / S288c) (Baker's yeast).